Reading from the N-terminus, the 3961-residue chain is Replicase polyprotein 1ab (3961 aa).

The C4-type; atypical zinc-finger motif lies at 8–28; that stretch reads CTCTPNARVFVAEGQVYCTRC. One can recognise a Peptidase C31 domain in the interval 69 to 180; the sequence is ECSPAGACWL…EDFCPFECAM (112 aa). Positions 69-182 are PCP1-alpha; sequence ECSPAGACWL…FCPFECAMAT (114 aa). Residues Cys-76 and His-146 each act as for Nsp1-alpha papain-like cysteine proteinase activity in the active site. The important for host EIF2AK2 inhibition stretch occupies residues 199-200; it reads IS. A PCP1-beta region spans residues 263–382; sequence DTVPEGNCWW…IFRFGSHKWY (120 aa). The Peptidase C32 domain maps to 263–383; that stretch reads DTVPEGNCWW…FRFGSHKWYG (121 aa). Residues Cys-270 and His-339 each act as for Nsp1-beta papain-like cysteine proteinase activity in the active site. The interval 426 to 513 is OTU-like; it reads LKHYSPPAEG…GEHWTVTVTP (88 aa). Residues 428–535 enclose the Peptidase C33 domain; that stretch reads HYSPPAEGNC…QGCCEHKGGL (108 aa). Catalysis depends on for Nsp2 cysteine proteinase activity residues Cys-437 and His-506. Disordered stretches follow at residues 809–862, 898–979, and 1153–1213; these read RWTP…NSWE, ATPL…GVLG, and NQEP…GGGP. Residues 810 to 819 show a composition bias toward pro residues; the sequence is WTPPPPPPKV. The next 8 membrane-spanning stretches (helical) occupy residues 1266–1286, 1296–1316, 1345–1365, 1368–1388, 1583–1603, 1650–1670, 1685–1705, and 1719–1739; these read LCLF…LGVF, GVFG…SDPV, SLVV…LGGA, IWHF…GAYV, LMAA…GIYV, ALVA…FVSI, CILL…LCVF, and ILWL…LAMV. Residues 1266–1388 form an HD1 region; sequence LCLFLCYSYP…ADCILAGAYV (123 aa). The interval 1583-1745 is HD2; the sequence is LMAALHVACS…LAMVLLVSLW (163 aa). One can recognise a Peptidase S32 domain in the interval 1810 to 2013; sequence GAFRTRKPSL…ALLAAKPELE (204 aa). Catalysis depends on charge relay system; for 3C-like serine proteinase activity residues His-1848, Asp-1873, and Ser-1927. The next 5 membrane-spanning stretches (helical) occupy residues 2012-2032, 2060-2080, 2092-2112, 2137-2157, and 2164-2184; these read LEGG…WRMM, FSFG…ILMI, WSLA…LAAT, SPVP…LYLF, and QILV…FAEG. The tract at residues 2036–2157 is HD3; that stretch reads WTPLVAVSFF…HLLAIILYLF (122 aa). The disordered stretch occupies residues 2329–2358; it reads PTPTPPPAPVPIPLPPKVLENGPNAWGDED. The span at 2330-2344 shows a compositional bias: pro residues; that stretch reads TPTPPPAPVPIPLPP. A NiRAN domain is found at 2488 to 2651; that stretch reads IIDKLQGLTK…LPYKLYPVRG (164 aa). In terms of domain architecture, RdRp catalytic spans 2890–3024; the sequence is GRCLEADLAS…YAESPTMPNY (135 aa). An AV ZBD domain is found at 3145-3208; it reads GKKSRVCGYC…SPVGKGTSPL (64 aa). Residues Cys-3151, Cys-3154, Cys-3164, Cys-3169, His-3172, His-3174, His-3176, His-3178, Cys-3185, His-3187, Cys-3194, and Cys-3197 each coordinate Zn(2+). The (+)RNA virus helicase ATP-binding domain occupies 3265 to 3417; it reads ASTALLPTCK…VFDIMPQTQL (153 aa). 3298 to 3305 is an ATP binding site; it reads GKTYWLLQ. One can recognise a (+)RNA virus helicase C-terminal domain in the interval 3418–3546; sequence KTIWRFGQNI…AVHRDGQLIV (129 aa). In terms of domain architecture, AV-Nsp11N/CoV-Nsp15M spans 3585–3681; it reads EGSSSPLPKV…LTKFVKGEAQ (97 aa). Residues 3683 to 3805 enclose the NendoU domain; sequence LPETVFSTGR…MVWRDKTAYF (123 aa). Active-site residues include His-3714, His-3729, and Lys-3758.

It belongs to the arteriviridae polyprotein family. Nsp1-alpha papain-like: Interacts with host RNF31. In terms of assembly, interacts with host EIF2AK2; this interaction occurs in host stress granules and leads to EIF2AK2 inhibition. Interacts with host G3BP1; this interaction probably plays a role in Nsp1-beta-mediated inhibition of host EIF2AK2. As to quaternary structure, interacts with host DDX18; this interaction redistributes host DDX18 to the cytoplasm. Interacts with host IFITM1. In terms of assembly, interacts with host DDX5. As to quaternary structure, interacts with host OTULIN. Interacts with host LGALS3. In terms of processing, specific enzymatic cleavages in vivo by its own proteases yield mature proteins. Nsp1 is autocleaved into two subunits, Nsp1-alpha and Nsp1-beta. There are two alternative pathways for processing. Either nsp4-5 is cleaved, which represents the major pathway or the nsp5-6 and nsp6-7 are processed, which represents the minor pathway. The major pathway occurs when nsp2 acts as a cofactor for nsp4.

It localises to the host nucleus. The protein resides in the host cytoplasm. It is found in the host membrane. Its subcellular location is the host endoplasmic reticulum. The protein localises to the host perinuclear region. The enzyme catalyses RNA(n) + a ribonucleoside 5'-triphosphate = RNA(n+1) + diphosphate. It carries out the reaction ATP + H2O = ADP + phosphate + H(+). It catalyses the reaction Thiol-dependent hydrolysis of ester, thioester, amide, peptide and isopeptide bonds formed by the C-terminal Gly of ubiquitin (a 76-residue protein attached to proteins as an intracellular targeting signal).. The catalysed reaction is uridylyl-uridylyl-ribonucleotide-RNA = a 3'-end uridylyl-2',3'-cyclophospho-uridine-RNA + a 5'-end dephospho-ribonucleoside-RNA. Functionally, contains the activities necessary for the transcription of negative stranded RNA, leader RNA, subgenomic mRNAs and progeny virion RNA as well as proteinases responsible for the cleavage of the polyprotein into functional products. Its function is as follows. Inhibits host IFN-beta production. Plays a role in the degradation of the host transcriptional activator CREBBP protein. The degradation of host CREBBP which is a key component of the IFN enhanceosome is likely responsible for the inhibition of interferon mediated by Nsp1-alpha. Also participates in the inhibition of host NF-kappa-B activation by counteracting LUBAC-dependent induction of NF-kappa-B. Reduces host NEMO ubiquitination by blocking the interaction between the two LUBAC complex components RNF31 and SHARPIN. Plays a role in blocking host mRNA nuclear export to the cytoplasm and subversion of host protein synthesis. Additionally, inhibits the interferon-activated JAK/STAT signal transduction by mediating the ubiquitination and subsequent proteasomal degradation of host KPNA1. Repurposes the host antiviral stress granules into a proviral platform to counteract the EIF2AK2/PKR restriction, thereby regulating the host inflammatory response. In terms of biological role, multifunctional protein that acts as a viral protease and as a viral antagonist of host immune response. Cleaves the nsp2/nsp3 site in the viral polyprotein. Displays deubiquitinating activity that cleaves both ubiquitinated and ISGylated products and therefore inhibits ubiquitin and ISG15-dependent host innate immunity. Also deubiquinates host NFKBIA, thereby interfering with NFKBIA degradation and impairing subsequent NF-kappa-B activation. Functionally, plays a role in the inhibition of the immune response by interacting with host IFITM1. This interaction leads to the proteasomal degradation of the IFN-induced antiviral protein IFITM1. Its function is as follows. Cleaves the majority of cleavage sites present in the C-terminus of the polyprotein. Triggers host apoptosis through caspase-3, -8, and -9 activations. Subverts host innate immune responses through its protease activity. Targets the NF-kappa-B essential modulator NEMO and mediates its cleavage. Blocks host interferon beta induction and downstream signaling by cleaving mitochondrial MAVS, dislodging it from the mitochondria. Impairs host defense by cleaving host mRNA-decapping enzyme DCP1A to attenuate its antiviral activity. Plays a role in the initial induction of autophagosomes from host endoplasmic reticulum. In terms of biological role, plays a role in the inhibition of host STAT3 signaling pathway by inducing the degradation of STAT3. Functionally, responsible for replication and transcription of the viral RNA genome. Its function is as follows. Displays RNA and DNA duplex-unwinding activities with 5' to 3' polarity. Plays a role in viral transcription/replication and prevents the simultaneous activation of host cell dsRNA sensors, such as MDA5/IFIH1, OAS, PKR and NLRP3 inflammasome. Acts by degrading the 5'-polyuridines generated during replication of the poly(A) region of viral genomic and subgenomic RNAs. Catalyzes a two-step reaction in which a 2'3'-cyclic phosphate (2'3'-cP) is first generated by 2'-O transesterification, which is then hydrolyzed to a 3'-phosphate (3'-P). If not degraded, poly(U) RNA would hybridize with poly(A) RNA tails and activate host dsRNA sensors. Also plays a role in the inhibition of host type I interferon production by recruiting host OTULIN to promote removal of linear ubiquitination targeting host NEMO. The protein is Replicase polyprotein 1ab (rep) of Porcine reproductive and respiratory syndrome virus (strain 16244B) (PRRSV).